A 118-amino-acid polypeptide reads, in one-letter code: MARVKRGVVARARHKKILKQAKGYYGARSRVYRVAFQAVIKAGQYAYRDRRQRKRQFRQLWIARINAAARQNDMSYSKFINGLKKASIEIDRKILADIAVFDKVAFSALVEKAKAALA.

This sequence belongs to the bacterial ribosomal protein bL20 family.

Its function is as follows. Binds directly to 23S ribosomal RNA and is necessary for the in vitro assembly process of the 50S ribosomal subunit. It is not involved in the protein synthesizing functions of that subunit. The chain is Large ribosomal subunit protein bL20 from Yersinia enterocolitica serotype O:8 / biotype 1B (strain NCTC 13174 / 8081).